We begin with the raw amino-acid sequence, 225 residues long: Germin-like protein 3-8 (225 aa).

The N-terminal stretch at 1-25 (MSRTSSAPLLVLSAALAVLASTCIA) is a signal peptide. Cysteine 34 and cysteine 57 are joined by a disulfide. The 149-residue stretch at 71-219 (AGLAVASDTD…SFQVDAKIIK (149 aa)) folds into the Cupin type-1 domain. Residue asparagine 86 is glycosylated (N-linked (GlcNAc...) asparagine). The Mn(2+) site is built by histidine 119, histidine 121, glutamate 126, and histidine 165.

It belongs to the germin family. In terms of assembly, oligomer (believed to be a pentamer but probably hexamer).

The protein resides in the secreted. The protein localises to the extracellular space. Its subcellular location is the apoplast. May play a role in plant defense. Probably has no oxalate oxidase activity even if the active site is conserved. The protein is Germin-like protein 3-8 of Oryza sativa subsp. japonica (Rice).